The sequence spans 342 residues: Protein RecA (342 aa).

Position 65-72 (65-72 (GPESSGKT)) interacts with ATP.

Belongs to the RecA family.

The protein localises to the cytoplasm. In terms of biological role, can catalyze the hydrolysis of ATP in the presence of single-stranded DNA, the ATP-dependent uptake of single-stranded DNA by duplex DNA, and the ATP-dependent hybridization of homologous single-stranded DNAs. It interacts with LexA causing its activation and leading to its autocatalytic cleavage. This Teredinibacter turnerae (strain ATCC 39867 / T7901) protein is Protein RecA.